We begin with the raw amino-acid sequence, 75 residues long: Small ribosomal subunit protein bS18 (75 aa).

It belongs to the bacterial ribosomal protein bS18 family. Part of the 30S ribosomal subunit. Forms a tight heterodimer with protein bS6.

Binds as a heterodimer with protein bS6 to the central domain of the 16S rRNA, where it helps stabilize the platform of the 30S subunit. The chain is Small ribosomal subunit protein bS18 from Wigglesworthia glossinidia brevipalpis.